The chain runs to 284 residues: Mediator of RNA polymerase II transcription subunit 4 (284 aa).

Position 2 is an N-acetylserine (S2). The interval 205–284 is disordered; it reads RIPGEEVEET…DLDLFDPDDF (80 aa). A compositionally biased stretch (basic and acidic residues) spans 225–238; the sequence is EEQKGQMAKKEGTP. A Phosphothreonine; by KIN28 modification is found at T237. S242 bears the Phosphoserine mark. Over residues 248–265 the composition is skewed to basic and acidic residues; sequence TAKEVGDEADNTKDKEKE. Positions 266-284 are enriched in acidic residues; the sequence is ENNDDALDLDLDLFDPDDF.

This sequence belongs to the Mediator complex subunit 4 family. Component of the Mediator complex, which is composed of at least 21 subunits that form three structurally distinct submodules. The Mediator head module contains MED6, MED8, MED11, SRB4/MED17, SRB5/MED18, ROX3/MED19, SRB2/MED20 and SRB6/MED22, the middle module contains MED1, MED4, NUT1/MED5, MED7, CSE2/MED9, NUT2/MED10, SRB7/MED21 and SOH1/MED31, and the tail module contains MED2, PGD1/MED3, RGR1/MED14, GAL11/MED15 and SIN4/MED16. The head and the middle modules interact directly with RNA polymerase II, whereas the elongated tail module interacts with gene-specific regulatory proteins. MED4 interacts directly with MED1, MED7 and SRB7/MED21.

The protein localises to the nucleus. Component of the Mediator complex, a coactivator involved in the regulated transcription of nearly all RNA polymerase II-dependent genes. Mediator functions as a bridge to convey information from gene-specific regulatory proteins to the basal RNA polymerase II transcription machinery. The Mediator complex, having a compact conformation in its free form, is recruited to promoters by direct interactions with regulatory proteins and serves for the assembly of a functional preinitiation complex with RNA polymerase II and the general transcription factors. The Mediator complex unfolds to an extended conformation and partially surrounds RNA polymerase II, specifically interacting with the unphosphorylated form of the C-terminal domain (CTD) of RNA polymerase II. The Mediator complex dissociates from the RNA polymerase II holoenzyme and stays at the promoter when transcriptional elongation begins. This chain is Mediator of RNA polymerase II transcription subunit 4 (MED4), found in Saccharomyces cerevisiae (strain ATCC 204508 / S288c) (Baker's yeast).